The sequence spans 460 residues: Interleukin-6 receptor subunit alpha (460 aa).

The N-terminal stretch at 1-19 (MLTVGCTLLVALLAAPAVA) is a signal peptide. The region spanning 20-116 (LVLGSCRALE…DVPPEEPKLS (97 aa)) is the Ig-like C2-type domain. Residues 20-364 (LVLGSCRALE…VQESSSMSLP (345 aa)) lie on the Extracellular side of the membrane. 4 cysteine pairs are disulfide-bonded: Cys25–Cys190, Cys47–Cys92, Cys117–Cys128, and Cys162–Cys173. 2 N-linked (GlcNAc...) asparagine glycosylation sites follow: Asn32 and Asn55. 2 consecutive Fibronectin type-III domains span residues 109–214 (PPEE…VQPD) and 215–313 (PPAN…TPWI). N-linked (GlcNAc...) asparagine glycosylation is present at Asn150. Asn218 carries an N-linked (GlcNAc...) asparagine glycan. The short motif at 300 to 304 (WSEWS) is the WSXWS motif element. Residues 365–385 (TFLVAGGSLAFGLLLCVFIIL) form a helical membrane-spanning segment. The Cytoplasmic segment spans residues 386 to 460 (RLKQKWKSEA…NSNRDYLFPR (75 aa)).

This sequence belongs to the type I cytokine receptor family. Type 3 subfamily. Component of a hexamer of two molecules each of IL6, IL6R and IL6ST; first binds to IL6 to associate with the signaling subunit IL6ST. Interacts (via N-terminal ectodomain) with SORL1; this interaction may affect IL6-binding to IL6R, hence decrease IL6 'classic-signaling'. As to quaternary structure, also interacts with SORL1; this interaction leads to soluble IL6R internalization. May form a trimeric complex with the soluble SORL1 ectodomain and circulating IL6 receptor; this interaction might stabilize circulating IL6, hence promote IL6 'trans-signaling'. A short soluble form is also released from the membrane by proteolysis. The sIL6R is formed by limited proteolysis of membrane-bound receptors, a process referred to as ectodomain shedding. mIL6R is cleaved by the proteases ADAM10 and ADAM17. In terms of processing, glycosylated. Glycosylation is dispensable for transport, signaling, and cell-surface turnover. Glycosylation at Asn-55 is a protease-regulatory exosite. Glycosylation is required for ADAM17-mediated proteolysis. As to expression, expressed by dendritic cells. In terms of tissue distribution, detected in the cerebrospinal fluid.

The protein localises to the cell membrane. The protein resides in the secreted. Its activity is regulated as follows. Classic and trans-signaling are both inhibited by tocilizumab, a humanized monoclonal antibody that blocks interleukin IL6R signaling. Part of the receptor for interleukin 6. Binds to IL6 with low affinity, but does not transduce a signal. Signal activation necessitate an association with IL6ST. Activation leads to the regulation of the immune response, acute-phase reactions and hematopoiesis. The interaction with membrane-bound IL6R and IL6ST stimulates 'classic signaling', the restricted expression of the IL6R limits classic IL6 signaling to only a few tissues such as the liver and some cells of the immune system. Whereas the binding of IL6 and soluble IL6R to IL6ST stimulates 'trans-signaling'. Alternatively, 'cluster signaling' occurs when membrane-bound IL6:IL6R complexes on transmitter cells activate IL6ST receptors on neighboring receiver cells. Its function is as follows. Signaling via the membrane-bound IL6R is mostly regenerative and anti-inflammatory. Drives naive CD4(+) T cells to the Th17 lineage, through 'cluster signaling' by dendritic cells. In terms of biological role, soluble form of IL6 receptor (sIL6R) that acts as an agonist of IL6 activity. The IL6:sIL6R complex (hyper-IL6) binds to IL6ST/gp130 on cell surfaces and induces signaling also on cells that do not express membrane-bound IL6R in a process called IL6 'trans-signaling'. sIL6R is causative for the pro-inflammatory properties of IL6 and an important player in the development of chronic inflammatory diseases. In complex with IL6, is required for induction of VEGF production. Plays a protective role during liver injury, being required for maintenance of tissue regeneration. 'Trans-signaling' in central nervous system regulates energy and glucose homeostasis. The chain is Interleukin-6 receptor subunit alpha from Mus musculus (Mouse).